We begin with the raw amino-acid sequence, 444 residues long: Xylose isomerase (444 aa).

Residues His101 and Asp104 contribute to the active site. Mg(2+) contacts are provided by Glu232, Glu268, His271, Asp296, Asp307, Asp309, and Asp339.

It belongs to the xylose isomerase family. In terms of assembly, homotetramer. The cofactor is Mg(2+).

Its subcellular location is the cytoplasm. The enzyme catalyses alpha-D-xylose = alpha-D-xylulofuranose. This chain is Xylose isomerase, found in Thermotoga petrophila (strain ATCC BAA-488 / DSM 13995 / JCM 10881 / RKU-1).